The following is a 141-amino-acid chain: AsCystatin (141 aa).

The N-terminal stretch at 1–26 (MVHSQLPVAAPLRLLCALLLLPLATM) is a signal peptide. A Cystatin domain is found at 29 to 129 (GGLSPRSVTD…CRFQVWSCPW (101 aa)). A Secondary area of contact motif is present at residues 73–77 (QVVTG). 2 disulfides stabilise this stretch: cysteine 91/cysteine 107 and cysteine 120/cysteine 140.

Belongs to the cystatin family. Expressed at a low level by the venom gland (at protein level).

The protein localises to the secreted. Recombinant AsCystatin inhibits various C1 cysteine proteases including cathepsin L (Ki is 0.89 pM), papain (Ki is 1.74 pM) and cathepsin B (Ki is 0.69 nM). This activity has also been observed in the crude venom. This protein has no toxic activity and its function in the venom is unknown. It may play a role as a housekeeping or regulatory protein. The chain is AsCystatin from Austrelaps superbus (Lowland copperhead snake).